Here is a 469-residue protein sequence, read N- to C-terminus: Argininosuccinate lyase (469 aa).

The protein belongs to the lyase 1 family. Argininosuccinate lyase subfamily.

Its subcellular location is the cytoplasm. It carries out the reaction 2-(N(omega)-L-arginino)succinate = fumarate + L-arginine. It functions in the pathway amino-acid biosynthesis; L-arginine biosynthesis; L-arginine from L-ornithine and carbamoyl phosphate: step 3/3. The protein is Argininosuccinate lyase of Burkholderia lata (strain ATCC 17760 / DSM 23089 / LMG 22485 / NCIMB 9086 / R18194 / 383).